Reading from the N-terminus, the 324-residue chain is Beta-ketoacyl-[acyl-carrier-protein] synthase III (324 aa).

Residues Cys-112 and His-249 contribute to the active site. The segment at 250 to 254 (QANRR) is ACP-binding. Asn-279 is a catalytic residue.

Belongs to the thiolase-like superfamily. FabH family. In terms of assembly, homodimer.

Its subcellular location is the cytoplasm. The catalysed reaction is malonyl-[ACP] + acetyl-CoA + H(+) = 3-oxobutanoyl-[ACP] + CO2 + CoA. Its pathway is lipid metabolism; fatty acid biosynthesis. In terms of biological role, catalyzes the condensation reaction of fatty acid synthesis by the addition to an acyl acceptor of two carbons from malonyl-ACP. Catalyzes the first condensation reaction which initiates fatty acid synthesis and may therefore play a role in governing the total rate of fatty acid production. Possesses both acetoacetyl-ACP synthase and acetyl transacylase activities. Its substrate specificity determines the biosynthesis of branched-chain and/or straight-chain of fatty acids. The protein is Beta-ketoacyl-[acyl-carrier-protein] synthase III of Streptococcus pyogenes serotype M49 (strain NZ131).